A 353-amino-acid chain; its full sequence is Outer membrane protein A (353 aa).

Residues 1-21 (MKKTAIALAVALVGFATVAQA) form the signal peptide. 8 consecutive transmembrane segments (beta stranded) span residues 27-37 (TWYTGGKLGWS), 56-67 (QLGAGAFFGYQA), 71-79 (LGFEMGYDW), 97-108 (QGVQLAAKLSYP), 113-121 (LDVYTRLGG), 148-157 (PLVALGAEYA), 162-169 (WATRMEYQ), and 188-196 (LLSVGVSYR). Tandem repeats lie at residues 208–209 (AP), 210–211 (TP), 212–213 (AP), and 214–215 (AP). Residues 208-215 (APTPAPAP) are 4 X 2 AA approximate tandem repeats of A-P. In terms of domain architecture, OmpA-like spans 217 to 345 (VDTKRFTLKS…RVEIEVKGYK (129 aa)). Cys-318 and Cys-330 are joined by a disulfide.

The protein belongs to the outer membrane OOP (TC 1.B.6) superfamily. OmpA family. In terms of assembly, monomer and homodimer.

Its subcellular location is the cell outer membrane. With TolR probably plays a role in maintaining the position of the peptidoglycan cell wall in the periplasm. Acts as a porin with low permeability that allows slow penetration of small solutes; an internal gate slows down solute passage. This chain is Outer membrane protein A, found in Yersinia pseudotuberculosis serotype I (strain IP32953).